A 180-amino-acid chain; its full sequence is Fanconi anemia core complex-associated protein 20 (180 aa).

The span at M1–R17 shows a compositional bias: basic residues. 2 disordered regions span residues M1–W28 and G106–Q135. Residues S113 and S137 each carry the phosphoserine modification. The UBZ2-type zinc-finger motif lies at L144–W180. Zn(2+) is bound by residues C147, C150, H166, and C170.

As to quaternary structure, component of the Fanconi anemia (FA) complex. Interacts with FANCA; interaction is direct. Interacts with REV1. Reported to bind monoubiquitinated REV1; however it binds better to non-ubiquitinated REV1.

The protein localises to the nucleus. Its subcellular location is the chromosome. Component of the Fanconi anemia (FA) complex required to recruit the FA complex to DNA interstrand cross-links (ICLs) and promote ICLs repair. Following DNA damage recognizes and binds 'Lys-63'-linked ubiquitin generated by RNF8 at ICLs and recruits other components of the FA complex. Promotes translesion synthesis via interaction with REV1. In Homo sapiens (Human), this protein is Fanconi anemia core complex-associated protein 20.